Consider the following 504-residue polypeptide: Chorion-specific transcription factor GCMb (504 aa).

The segment at residues Leu-19–Ala-174 is a DNA-binding region (GCM). Positions 81, 87, 91, 118, 121, 130, 157, and 159 each coordinate Zn(2+). Composition is skewed to basic and acidic residues over residues Gly-155 to Arg-172 and Arg-188 to Gly-203. The interval Gly-155–Gly-203 is disordered. The interval Leu-379–Gln-393 is C-terminal conserved inhibitory domain (CCID). The tract at residues Ala-438 to Gly-472 is disordered.

Its subcellular location is the nucleus. In terms of biological role, transcription factor that binds specific sequences on gene promoters and activate their transcription. Through the regulation of gene transcription, may play a role in parathyroid gland development. This chain is Chorion-specific transcription factor GCMb, found in Mus musculus (Mouse).